The primary structure comprises 179 residues: ATP synthase subunit delta (179 aa).

Belongs to the ATPase delta chain family. In terms of assembly, F-type ATPases have 2 components, F(1) - the catalytic core - and F(0) - the membrane proton channel. F(1) has five subunits: alpha(3), beta(3), gamma(1), delta(1), epsilon(1). F(0) has three main subunits: a(1), b(2) and c(10-14). The alpha and beta chains form an alternating ring which encloses part of the gamma chain. F(1) is attached to F(0) by a central stalk formed by the gamma and epsilon chains, while a peripheral stalk is formed by the delta and b chains.

It localises to the cell inner membrane. F(1)F(0) ATP synthase produces ATP from ADP in the presence of a proton or sodium gradient. F-type ATPases consist of two structural domains, F(1) containing the extramembraneous catalytic core and F(0) containing the membrane proton channel, linked together by a central stalk and a peripheral stalk. During catalysis, ATP synthesis in the catalytic domain of F(1) is coupled via a rotary mechanism of the central stalk subunits to proton translocation. Its function is as follows. This protein is part of the stalk that links CF(0) to CF(1). It either transmits conformational changes from CF(0) to CF(1) or is implicated in proton conduction. The chain is ATP synthase subunit delta from Anaeromyxobacter dehalogenans (strain 2CP-1 / ATCC BAA-258).